Here is a 605-residue protein sequence, read N- to C-terminus: MMRARFPLLLLGLVFLASVSVSFGIAYWEKENPKHNKCLQSCNSERDSYRNQACHARCNLLKVEKEECEEGEIPRPRPRPQHPEREPQQPGEKEEDEDEQPRPIPFPRPQPRQEEEHEQREEQEWPRKEEKRGEKGSEEEDEDEDEEQDERQFPFPRPPHQKEERKQEEDEDEEQQRESEESEDSELRRHKNKNPFLFGSNRFETLFKNQYGRIRVLQRFNQRSPQLQNLRDYRILEFNSKPNTLLLPNHADADYLIVILNGTAILSLVNNDDRDSYRLQSGDALRVPSGTTYYVVNPDNNENLRLITLAIPVNKPGRFESFFLSSTEAQQSYLQGFSRNILEASYDTKFEEINKVLFSREEGQQQGEQRLQESVIVEISKEQIRALSKRAKSSSRKTISSEDKPFNLRSRDPIYSNKLGKFFEITPEKNPQLRDLDIFLSIVDMNEGALLLPHFNSKAIVILVINEGDANIELVGLKEQQQEQQQEEQPLEVRKYRAELSEQDIFVIPAGYPVVVNATSNLNFFAIGINAENNQRNFLAGSQDNVISQIPSQVQELAFPGSAQAVEKLLKNQRESYFVDAQPKKKEEGNKGRKGPLSSILRAFY.

A signal peptide spans 1–22 (MMRARFPLLLLGLVFLASVSVS). Positions 23–62 (FGIAYWEKENPKHNKCLQSCNSERDSYRNQACHARCNLLK) are excised as a propeptide. The segment at 65-195 (KEECEEGEIP…ELRRHKNKNP (131 aa)) is disordered. Basic and acidic residues predominate over residues 111–136 (PRQEEEHEQREEQEWPRKEEKRGEKG). Acidic residues-rich tracts occupy residues 137-149 (SEEE…EEQD) and 169-184 (EDED…ESED). Cupin type-1 domains follow at residues 196-354 (FLFG…EEIN) and 406-567 (FNLR…QAVE). 2 N-linked (GlcNAc...) asparagine glycosylation sites follow: N261 and N517.

Belongs to the 7S seed storage protein family. In terms of assembly, the alpha-, alpha'-, and beta-subunits associate in various combinations to form trimeric proteins.

The protein localises to the vacuole. Its subcellular location is the aleurone grain. It is found in the endoplasmic reticulum. The protein resides in the protein storage vacuole. Functionally, seed storage protein. Accumulates during seed development and is hydrolyzed after germination to provide a carbon and nitrogen source for the developing seedling. This Glycine max (Soybean) protein is Beta-conglycinin alpha subunit 1.